A 350-amino-acid polypeptide reads, in one-letter code: Twinfilin-1 (350 aa).

Residue serine 2 is modified to N-acetylserine. Positions 2–139 constitute an ADF-H 1 domain; it reads SHQTGIQASE…SLHGYKKYLL (138 aa). 2 positions are modified to phosphoserine: serine 143 and serine 277. The ADF-H 2 domain occupies 175-313; it reads LQGVAFPISR…TADFLYDEVH (139 aa). Tyrosine 309 is subject to Phosphotyrosine. Positions 317 to 350 are disordered; that stretch reads HAHKQSFAKPKGPAGKRGIRRLIRGPAEAEATTD. Threonine 349 carries the phosphothreonine modification.

Belongs to the actin-binding proteins ADF family. Twinfilin subfamily. Interacts with G-actin; ADP-actin form and capping protein (CP). May also be able to interact with TWF2 and phosphoinositides, PI(4,5)P2. When bound to PI(4,5)P2, it is down-regulated. Interacts with ACTG1. Post-translationally, phosphorylated on serine and threonine residues. Widely expressed with highest levels in brain, liver and kidney. Also expressed in heart, lung and testis. Not detected in spleen or skeletal muscle.

Its subcellular location is the cytoplasm. The protein localises to the cytoskeleton. Actin-binding protein involved in motile and morphological processes. Inhibits actin polymerization, likely by sequestering G-actin. By capping the barbed ends of filaments, it also regulates motility. Seems to play an important role in clathrin-mediated endocytosis and distribution of endocytic organelles. The polypeptide is Twinfilin-1 (Twf1) (Mus musculus (Mouse)).